Consider the following 406-residue polypeptide: Arginine deiminase (406 aa).

The active-site Amidino-cysteine intermediate is cysteine 396.

This sequence belongs to the arginine deiminase family.

It localises to the cytoplasm. The catalysed reaction is L-arginine + H2O = L-citrulline + NH4(+). The protein operates within amino-acid degradation; L-arginine degradation via ADI pathway; carbamoyl phosphate from L-arginine: step 1/2. The sequence is that of Arginine deiminase from Aliivibrio fischeri (strain MJ11) (Vibrio fischeri).